Reading from the N-terminus, the 292-residue chain is 4-diphosphocytidyl-2-C-methyl-D-erythritol kinase (292 aa).

The active site involves Lys11. Residue 95–105 coordinates ATP; the sequence is PVSAGLAGGSS. Residue Asp137 is part of the active site.

It belongs to the GHMP kinase family. IspE subfamily.

It carries out the reaction 4-CDP-2-C-methyl-D-erythritol + ATP = 4-CDP-2-C-methyl-D-erythritol 2-phosphate + ADP + H(+). It functions in the pathway isoprenoid biosynthesis; isopentenyl diphosphate biosynthesis via DXP pathway; isopentenyl diphosphate from 1-deoxy-D-xylulose 5-phosphate: step 3/6. In terms of biological role, catalyzes the phosphorylation of the position 2 hydroxy group of 4-diphosphocytidyl-2C-methyl-D-erythritol. This is 4-diphosphocytidyl-2-C-methyl-D-erythritol kinase from Alkaliphilus oremlandii (strain OhILAs) (Clostridium oremlandii (strain OhILAs)).